A 434-amino-acid chain; its full sequence is Glutamate-1-semialdehyde 2,1-aminomutase 1 (434 aa).

At Lys270 the chain carries N6-(pyridoxal phosphate)lysine.

The protein belongs to the class-III pyridoxal-phosphate-dependent aminotransferase family. HemL subfamily. Homodimer. It depends on pyridoxal 5'-phosphate as a cofactor.

Its subcellular location is the cytoplasm. It carries out the reaction (S)-4-amino-5-oxopentanoate = 5-aminolevulinate. The protein operates within porphyrin-containing compound metabolism; protoporphyrin-IX biosynthesis; 5-aminolevulinate from L-glutamyl-tRNA(Glu): step 2/2. The polypeptide is Glutamate-1-semialdehyde 2,1-aminomutase 1 (Bacillus cereus (strain AH187)).